Consider the following 127-residue polypeptide: Phosphoribosyl-AMP cyclohydrolase (127 aa).

Position 75 (Asp75) interacts with Mg(2+). Cys76 is a binding site for Zn(2+). 2 residues coordinate Mg(2+): Asp77 and Asp79. Zn(2+) contacts are provided by Cys93 and Cys100.

It belongs to the PRA-CH family. Homodimer. Mg(2+) serves as cofactor. The cofactor is Zn(2+).

Its subcellular location is the cytoplasm. The enzyme catalyses 1-(5-phospho-beta-D-ribosyl)-5'-AMP + H2O = 1-(5-phospho-beta-D-ribosyl)-5-[(5-phospho-beta-D-ribosylamino)methylideneamino]imidazole-4-carboxamide. Its pathway is amino-acid biosynthesis; L-histidine biosynthesis; L-histidine from 5-phospho-alpha-D-ribose 1-diphosphate: step 3/9. In terms of biological role, catalyzes the hydrolysis of the adenine ring of phosphoribosyl-AMP. In Desulfotalea psychrophila (strain LSv54 / DSM 12343), this protein is Phosphoribosyl-AMP cyclohydrolase.